Consider the following 1704-residue polypeptide: Arf-GAP with Rho-GAP domain, ANK repeat and PH domain-containing protein 2 (1704 aa).

The SAM domain maps to 6–70; the sequence is EVNVDIKDFL…LKQLQIILSK (65 aa). The residue at position 77 (Tyr-77) is a Phosphotyrosine. The disordered stretch occupies residues 126 to 161; sequence NLEDSDASVERSQYPQSDDKLSPPKRDFPTAEEPHL. The segment covering 142-160 has biased composition (basic and acidic residues); sequence SDDKLSPPKRDFPTAEEPH. PH domains are found at residues 482–574 and 587–679; these read KKVK…NALK and TPEK…QSIA. Residues 676–811 enclose the Arf-GAP domain; it reads QSIAETLSDY…TLLASLTKEE (136 aa). A C4-type zinc finger spans residues 700–723; the sequence is CADCKAPDPDWASINLCVVICKKC. PH domains follow at residues 878-1003 and 1014-1114; these read DIHS…KHFV and DYDL…AGTD. A Rho-GAP domain is found at 1116–1297; the sequence is NALQDQQLSK…DLINNYVEIF (182 aa). The 95-residue stretch at 1326–1420 folds into the Ras-associating domain; it reads GDLLIEVYVE…AYLVVKRFLT (95 aa). The region spanning 1434–1537 is the PH 5 domain; sequence GSIKEGILKI…WMTSIFIAQH (104 aa). Ser-1632 bears the Phosphoserine mark. Positions 1636 to 1675 are disordered; it reads LEDTEPEAPLGQPKGHKGLKTLRKTEDRNSKATLDSDHKL. The span at 1658–1675 shows a compositional bias: basic and acidic residues; the sequence is RKTEDRNSKATLDSDHKL.

In terms of tissue distribution, detected in brain, thymus, lymph node, thyroid, spinal cord, trachea, heart, skeletal muscle, spleen, kidney, liver, placenta, lung and peripheral blood leukocytes.

The protein resides in the cytoplasm. Phosphatidylinositol 3,4,5-trisphosphate-dependent GTPase-activating protein that modulates actin cytoskeleton remodeling by regulating ARF and RHO family members. Is activated by phosphatidylinositol 3,4,5-trisphosphate (PtdIns(3,4,5)P3) binding. Can be activated by phosphatidylinositol 3,4-bisphosphate (PtdIns(3,4,5)P2) binding, albeit with lower efficiency. The protein is Arf-GAP with Rho-GAP domain, ANK repeat and PH domain-containing protein 2 (ARAP2) of Homo sapiens (Human).